A 225-amino-acid chain; its full sequence is Chalcone--flavanone isomerase 3 (225 aa).

T51, N116, and T193 together coordinate substrate.

This sequence belongs to the chalcone isomerase family.

The catalysed reaction is a chalcone = a flavanone.. The protein operates within secondary metabolite biosynthesis; flavonoid biosynthesis. Functionally, catalyzes the intramolecular cyclization of bicyclic chalcones into tricyclic (S)-flavanones. Responsible for the isomerization of 4,2',4',6'-tetrahydroxychalcone (also termed chalcone) into naringenin. This Lotus japonicus (Lotus corniculatus var. japonicus) protein is Chalcone--flavanone isomerase 3 (CHI3).